Reading from the N-terminus, the 298-residue chain is 4-hydroxy-tetrahydrodipicolinate synthase (298 aa).

A pyruvate-binding site is contributed by Thr-51. The Proton donor/acceptor role is filled by Tyr-139. Lys-167 functions as the Schiff-base intermediate with substrate in the catalytic mechanism. Ile-209 is a binding site for pyruvate.

Belongs to the DapA family. As to quaternary structure, homotetramer; dimer of dimers.

Its subcellular location is the cytoplasm. It carries out the reaction L-aspartate 4-semialdehyde + pyruvate = (2S,4S)-4-hydroxy-2,3,4,5-tetrahydrodipicolinate + H2O + H(+). It functions in the pathway amino-acid biosynthesis; L-lysine biosynthesis via DAP pathway; (S)-tetrahydrodipicolinate from L-aspartate: step 3/4. In terms of biological role, catalyzes the condensation of (S)-aspartate-beta-semialdehyde [(S)-ASA] and pyruvate to 4-hydroxy-tetrahydrodipicolinate (HTPA). This is 4-hydroxy-tetrahydrodipicolinate synthase from Histophilus somni (strain 2336) (Haemophilus somnus).